The following is a 322-amino-acid chain: Aspartate carbamoyltransferase catalytic subunit (322 aa).

The carbamoyl phosphate site is built by R65 and T66. Residue K93 participates in L-aspartate binding. Carbamoyl phosphate-binding residues include R115, H143, and Q146. R176 and R230 together coordinate L-aspartate. Residues G271 and P272 each contribute to the carbamoyl phosphate site.

It belongs to the aspartate/ornithine carbamoyltransferase superfamily. ATCase family. Heterododecamer (2C3:3R2) of six catalytic PyrB chains organized as two trimers (C3), and six regulatory PyrI chains organized as three dimers (R2).

It catalyses the reaction carbamoyl phosphate + L-aspartate = N-carbamoyl-L-aspartate + phosphate + H(+). Its pathway is pyrimidine metabolism; UMP biosynthesis via de novo pathway; (S)-dihydroorotate from bicarbonate: step 2/3. Catalyzes the condensation of carbamoyl phosphate and aspartate to form carbamoyl aspartate and inorganic phosphate, the committed step in the de novo pyrimidine nucleotide biosynthesis pathway. In Brucella canis (strain ATCC 23365 / NCTC 10854 / RM-666), this protein is Aspartate carbamoyltransferase catalytic subunit.